Here is a 338-residue protein sequence, read N- to C-terminus: Peroxidase 15 (338 aa).

Positions Met-1–Cys-22 are cleaved as a signal peptide. Intrachain disulfides connect Cys-45–Cys-125, Cys-78–Cys-83, Cys-131–Cys-332, and Cys-210–Cys-242. His-76 serves as the catalytic Proton acceptor. Positions 77, 80, 82, 84, and 86 each coordinate Ca(2+). Position 173 (Pro-173) interacts with substrate. N-linked (GlcNAc...) asparagine glycosylation is present at Asn-176. Residue His-203 participates in heme b binding. A Ca(2+)-binding site is contributed by Thr-204. N-linked (GlcNAc...) asparagine glycans are attached at residues Asn-219 and Asn-250. Positions 255, 258, and 263 each coordinate Ca(2+).

This sequence belongs to the peroxidase family. Classical plant (class III) peroxidase subfamily. Heme b serves as cofactor. Requires Ca(2+) as cofactor.

It is found in the secreted. The enzyme catalyses 2 a phenolic donor + H2O2 = 2 a phenolic radical donor + 2 H2O. In terms of biological role, removal of H(2)O(2), oxidation of toxic reductants, biosynthesis and degradation of lignin, suberization, auxin catabolism, response to environmental stresses such as wounding, pathogen attack and oxidative stress. These functions might be dependent on each isozyme/isoform in each plant tissue. The chain is Peroxidase 15 (PER15) from Arabidopsis thaliana (Mouse-ear cress).